Reading from the N-terminus, the 244-residue chain is Small ribosomal subunit protein uS2 (244 aa).

This sequence belongs to the universal ribosomal protein uS2 family.

This is Small ribosomal subunit protein uS2 from Psychromonas ingrahamii (strain DSM 17664 / CCUG 51855 / 37).